A 570-amino-acid polypeptide reads, in one-letter code: Hydroxylamine reductase (570 aa).

Cys5, Cys8, Cys17, and Cys23 together coordinate [4Fe-4S] cluster. Positions 266, 290, 334, 425, 453, 478, 513, and 515 each coordinate hybrid [4Fe-2O-2S] cluster. Position 425 is a cysteine persulfide (Cys425).

This sequence belongs to the HCP family. Requires [4Fe-4S] cluster as cofactor. Hybrid [4Fe-2O-2S] cluster is required as a cofactor.

Its subcellular location is the cytoplasm. The catalysed reaction is A + NH4(+) + H2O = hydroxylamine + AH2 + H(+). In terms of biological role, catalyzes the reduction of hydroxylamine to form NH(3) and H(2)O. The polypeptide is Hydroxylamine reductase (Clostridium botulinum (strain Langeland / NCTC 10281 / Type F)).